We begin with the raw amino-acid sequence, 935 residues long: Isoleucine--tRNA ligase (935 aa).

The 'HIGH' region signature appears at 58–68; sequence PYANGNLHLGH. Glu559 contacts L-isoleucyl-5'-AMP. Positions 600 to 604 match the 'KMSKS' region motif; the sequence is KMSKS. An ATP-binding site is contributed by Lys603. Positions 898, 901, 918, and 921 each coordinate Zn(2+).

This sequence belongs to the class-I aminoacyl-tRNA synthetase family. IleS type 1 subfamily. Monomer. Zn(2+) is required as a cofactor.

The protein localises to the cytoplasm. It carries out the reaction tRNA(Ile) + L-isoleucine + ATP = L-isoleucyl-tRNA(Ile) + AMP + diphosphate. In terms of biological role, catalyzes the attachment of isoleucine to tRNA(Ile). As IleRS can inadvertently accommodate and process structurally similar amino acids such as valine, to avoid such errors it has two additional distinct tRNA(Ile)-dependent editing activities. One activity is designated as 'pretransfer' editing and involves the hydrolysis of activated Val-AMP. The other activity is designated 'posttransfer' editing and involves deacylation of mischarged Val-tRNA(Ile). This chain is Isoleucine--tRNA ligase, found in Haemophilus ducreyi (strain 35000HP / ATCC 700724).